A 288-amino-acid polypeptide reads, in one-letter code: Ribonuclease HIII (288 aa).

Residues 76–288 (YSAIGSDEVG…KNITKQFIKN (213 aa)) form the RNase H type-2 domain. A divalent metal cation-binding residues include Asp82, Glu83, and Asp185.

The protein belongs to the RNase HII family. RnhC subfamily. The cofactor is Mn(2+). Mg(2+) serves as cofactor.

It is found in the cytoplasm. It catalyses the reaction Endonucleolytic cleavage to 5'-phosphomonoester.. Functionally, endonuclease that specifically degrades the RNA of RNA-DNA hybrids. The polypeptide is Ribonuclease HIII (Phytoplasma mali (strain AT)).